The primary structure comprises 242 residues: ATP synthase subunit a (242 aa).

A run of 5 helical transmembrane segments spans residues 21-41, 79-99, 116-136, 173-193, and 198-218; these read LSSI…AIIC, FHFL…LGLP, DATV…FYGV, LYGN…LVTG, and AWGW…SIFI.

This sequence belongs to the ATPase A chain family. In terms of assembly, F-type ATPases have 2 components, CF(1) - the catalytic core - and CF(0) - the membrane proton channel. CF(1) has five subunits: alpha(3), beta(3), gamma(1), delta(1), epsilon(1). CF(0) has three main subunits: a(1), b(2) and c(9-12). The alpha and beta chains form an alternating ring which encloses part of the gamma chain. CF(1) is attached to CF(0) by a central stalk formed by the gamma and epsilon chains, while a peripheral stalk is formed by the delta and b chains.

It localises to the cell membrane. Its function is as follows. Key component of the proton channel; it plays a direct role in the translocation of protons across the membrane. In Staphylococcus saprophyticus subsp. saprophyticus (strain ATCC 15305 / DSM 20229 / NCIMB 8711 / NCTC 7292 / S-41), this protein is ATP synthase subunit a.